A 182-amino-acid chain; its full sequence is Lipoprotein signal peptidase (182 aa).

3 helical membrane passes run 21–41 (LLLS…VLAV), 74–94 (GYTW…FWMG), and 98–118 (VSPW…GNLV). Active-site residues include Asp134 and Asp148. Residues 146–166 (VADPSVVGGAILLVVLSIFGY) form a helical membrane-spanning segment.

It belongs to the peptidase A8 family.

The protein localises to the cell membrane. It carries out the reaction Release of signal peptides from bacterial membrane prolipoproteins. Hydrolyzes -Xaa-Yaa-Zaa-|-(S,diacylglyceryl)Cys-, in which Xaa is hydrophobic (preferably Leu), and Yaa (Ala or Ser) and Zaa (Gly or Ala) have small, neutral side chains.. Its pathway is protein modification; lipoprotein biosynthesis (signal peptide cleavage). Its function is as follows. This protein specifically catalyzes the removal of signal peptides from prolipoproteins. The sequence is that of Lipoprotein signal peptidase from Mycobacterium avium (strain 104).